We begin with the raw amino-acid sequence, 80 residues long: Serine palmitoyltransferase small subunit B (80 aa).

At Met1–Ser11 the chain is on the cytoplasmic side. The chain crosses the membrane as a helical span at residues Trp12–Trp29. Topologically, residues Glu30 to Thr36 are lumenal. The helical transmembrane segment at Leu37 to Val57 threads the bilayer. The Cytoplasmic portion of the chain corresponds to Arg58–Ser80.

This sequence belongs to the SPTSS family. SPTSSB subfamily. As to quaternary structure, component of the serine palmitoyltransferase (SPT) complex, which is composed of SPTLC1, SPTLC2 or SPTLC3 and SPTSSA or SPTSSB. The heterodimer consisting of SPTLC1 and SPTLC2/SPTLC3 forms the catalytic core of the enzyme, while SPTSSA or SPTSSB subunits determine substrate specificity. SPT also interacts with ORMDL proteins, especially ORMDL3, which negatively regulate SPT activity in the presence of ceramides.

Its subcellular location is the endoplasmic reticulum membrane. It functions in the pathway lipid metabolism; sphingolipid metabolism. In terms of biological role, component of the serine palmitoyltransferase multisubunit enzyme (SPT) that catalyzes the initial and rate-limiting step in sphingolipid biosynthesis by condensing L-serine and activated acyl-CoA (most commonly palmitoyl-CoA) to form long-chain bases. The SPT complex is composed of SPTLC1, SPTLC2 or SPTLC3 and SPTSSA or SPTSSB. Within this complex, the heterodimer consisting of SPTLC1 and SPTLC2/SPTLC3 forms the catalytic core. Within the SPT complex, SPTSSB stimulates the catalytic activity and plays a role in substrate specificity. SPT complexes with this subunit showing a preference for longer acyl-CoAs. The SPTLC1-SPTLC2-SPTSSB complex shows a strong preference for C18-CoA substrate, while the SPTLC1-SPTLC3-SPTSSB isozyme displays an ability to use a broader range of acyl-CoAs, without apparent preference. In Xenopus laevis (African clawed frog), this protein is Serine palmitoyltransferase small subunit B (sptssb).